The sequence spans 228 residues: Cytochrome c oxidase subunit 2 (228 aa).

At 1-26 the chain is on the mitochondrial intermembrane side; it reads MATWNNLNLQNGASPLMEQIIFFHDH. A helical membrane pass occupies residues 27–48; the sequence is TLIILIMITILVGYLMINLFFN. Residues 49 to 62 are Mitochondrial matrix-facing; the sequence is KYINRFLLEGQMIE. A helical transmembrane segment spans residues 63-82; the sequence is LIWTILPAITLIFIALPSLR. The Mitochondrial intermembrane segment spans residues 83–228; that stretch reads LLYLLDELNN…FIKWINNYSS (146 aa). Positions 161, 196, 198, 200, 204, and 207 each coordinate Cu cation. Glutamate 198 contributes to the Mg(2+) binding site.

The protein belongs to the cytochrome c oxidase subunit 2 family. Component of the cytochrome c oxidase (complex IV, CIV), a multisubunit enzyme composed of a catalytic core of 3 subunits and several supernumerary subunits. The complex exists as a monomer or a dimer and forms supercomplexes (SCs) in the inner mitochondrial membrane with ubiquinol-cytochrome c oxidoreductase (cytochrome b-c1 complex, complex III, CIII). Cu cation is required as a cofactor.

The protein resides in the mitochondrion inner membrane. It catalyses the reaction 4 Fe(II)-[cytochrome c] + O2 + 8 H(+)(in) = 4 Fe(III)-[cytochrome c] + 2 H2O + 4 H(+)(out). Functionally, component of the cytochrome c oxidase, the last enzyme in the mitochondrial electron transport chain which drives oxidative phosphorylation. The respiratory chain contains 3 multisubunit complexes succinate dehydrogenase (complex II, CII), ubiquinol-cytochrome c oxidoreductase (cytochrome b-c1 complex, complex III, CIII) and cytochrome c oxidase (complex IV, CIV), that cooperate to transfer electrons derived from NADH and succinate to molecular oxygen, creating an electrochemical gradient over the inner membrane that drives transmembrane transport and the ATP synthase. Cytochrome c oxidase is the component of the respiratory chain that catalyzes the reduction of oxygen to water. Electrons originating from reduced cytochrome c in the intermembrane space (IMS) are transferred via the dinuclear copper A center (CU(A)) of subunit 2 and heme A of subunit 1 to the active site in subunit 1, a binuclear center (BNC) formed by heme A3 and copper B (CU(B)). The BNC reduces molecular oxygen to 2 water molecules using 4 electrons from cytochrome c in the IMS and 4 protons from the mitochondrial matrix. The protein is Cytochrome c oxidase subunit 2 (COII) of Yponomeuta malinellus (European small ermine moth).